We begin with the raw amino-acid sequence, 689 residues long: Elongation factor G (689 aa).

The tr-type G domain occupies 8–282 (LNTRNIGIMA…AVVDYLPSPI (275 aa)). Residues 17-24 (AHIDAGKT), 81-85 (DTPGH), and 135-138 (NKMD) each bind GTP.

The protein belongs to the TRAFAC class translation factor GTPase superfamily. Classic translation factor GTPase family. EF-G/EF-2 subfamily.

The protein localises to the cytoplasm. In terms of biological role, catalyzes the GTP-dependent ribosomal translocation step during translation elongation. During this step, the ribosome changes from the pre-translocational (PRE) to the post-translocational (POST) state as the newly formed A-site-bound peptidyl-tRNA and P-site-bound deacylated tRNA move to the P and E sites, respectively. Catalyzes the coordinated movement of the two tRNA molecules, the mRNA and conformational changes in the ribosome. The polypeptide is Elongation factor G (Mycoplasma capricolum subsp. capricolum (strain California kid / ATCC 27343 / NCTC 10154)).